An 89-amino-acid chain; its full sequence is MALSVEEKAQIVAEYQQTAGDTGSPEVQVALLTANINKLQGHLKPTTKTTTPVRGLIRMVNHRRKLLDYLKGKDTTRYSALIGRLGLRR.

It belongs to the universal ribosomal protein uS15 family. In terms of assembly, part of the 30S ribosomal subunit. Forms a bridge to the 50S subunit in the 70S ribosome, contacting the 23S rRNA.

Its function is as follows. One of the primary rRNA binding proteins, it binds directly to 16S rRNA where it helps nucleate assembly of the platform of the 30S subunit by binding and bridging several RNA helices of the 16S rRNA. Functionally, forms an intersubunit bridge (bridge B4) with the 23S rRNA of the 50S subunit in the ribosome. In Pseudomonas putida (Arthrobacter siderocapsulatus), this protein is Small ribosomal subunit protein uS15.